A 644-amino-acid chain; its full sequence is Phosphomethylpyrimidine synthase (644 aa).

Substrate is bound by residues Asn-236, Met-265, Tyr-294, His-330, 350–352 (SRG), 391–394 (DGLR), and Glu-430. Position 434 (His-434) interacts with Zn(2+). Substrate is bound at residue Tyr-457. Zn(2+) is bound at residue His-498. [4Fe-4S] cluster-binding residues include Cys-578, Cys-581, and Cys-586. A disordered region spans residues 623 to 644 (RQKSEEFKASGSELYHPAVEAE).

It belongs to the ThiC family. In terms of assembly, homodimer. It depends on [4Fe-4S] cluster as a cofactor.

The catalysed reaction is 5-amino-1-(5-phospho-beta-D-ribosyl)imidazole + S-adenosyl-L-methionine = 4-amino-2-methyl-5-(phosphooxymethyl)pyrimidine + CO + 5'-deoxyadenosine + formate + L-methionine + 3 H(+). It participates in cofactor biosynthesis; thiamine diphosphate biosynthesis. Catalyzes the synthesis of the hydroxymethylpyrimidine phosphate (HMP-P) moiety of thiamine from aminoimidazole ribotide (AIR) in a radical S-adenosyl-L-methionine (SAM)-dependent reaction. The chain is Phosphomethylpyrimidine synthase from Aliivibrio fischeri (strain MJ11) (Vibrio fischeri).